Reading from the N-terminus, the 706-residue chain is Envelope glycoprotein H (706 aa).

Residues 1-18 form the signal peptide; the sequence is MQLLCVFCLVLLWEVGAA. At 19 to 682 the chain is on the virion surface side; sequence SLSEVKLHLD…LYEERAHVVL (664 aa). N-linked (GlcNAc...) asparagine; by host glycosylation is present at Asn60. Residues 165–229 are interaction with gL; that stretch reads DKFQYTGAMT…QSGDYSLVIV (65 aa). Cysteines 278 and 335 form a disulfide. An N-linked (GlcNAc...) asparagine; by host glycan is attached at Asn435. Disulfide bonds link Cys454/Cys478 and Cys534/Cys587. N-linked (GlcNAc...) asparagine; by host glycans are attached at residues Asn549 and Asn604. A disulfide bond links Cys612 and Cys615. The N-linked (GlcNAc...) asparagine; by host glycan is linked to Asn664. A helical membrane pass occupies residues 683–703; that stretch reads AIILYFIAFALGIFLVHKIVM. Over 704–706 the chain is Intravirion; it reads FFL.

It belongs to the herpesviridae glycoprotein H family. As to quaternary structure, interacts with glycoprotein L (gL); this interaction is necessary for the correct processing and cell surface expression of gH. The heterodimer gH/gL seems to interact with gB trimers during fusion. The heterodimer gH/gL interacts with host EPHA2 to facilitate virus internalization and fusion. Interacts with glycoprotein 42/BZLF2. Post-translationally, N-glycosylated, O-glycosylated, and sialylated.

The protein resides in the virion membrane. It localises to the host cell membrane. It is found in the host endosome membrane. The heterodimer glycoprotein H-glycoprotein L is required for the fusion of viral and plasma membranes leading to virus entry into the host cell. Following initial binding to host receptor, membrane fusion is mediated by the fusion machinery composed of gB and the heterodimer gH/gL. May also be involved in the fusion between the virion envelope and the outer nuclear membrane during virion morphogenesis. The heterodimer gH/gL targets also host EPHA2 to promote viral entry. The protein is Envelope glycoprotein H of Homo sapiens (Human).